The chain runs to 501 residues: Putative lon protease homolog (501 aa).

53 to 60 (GPPGIGKS) contributes to the ATP binding site. Positions 481–494 (SSSQRMSQHGYSSE) are enriched in polar residues. Residues 481–501 (SSSQRMSQHGYSSENIDRSYM) are disordered.

The protein belongs to the peptidase S16 family.

This Methanothermobacter thermautotrophicus (strain ATCC 29096 / DSM 1053 / JCM 10044 / NBRC 100330 / Delta H) (Methanobacterium thermoautotrophicum) protein is Putative lon protease homolog.